A 240-amino-acid polypeptide reads, in one-letter code: T-cell antigen CD7 (240 aa).

Residues 1 to 25 (MAGPPRLLLLPLLLALARGLPGALA) form the signal peptide. Residues 26–130 (AQEVQQSPHC…NVYGSGTLVL (105 aa)) enclose the Ig-like domain. Residues 26-180 (AQEVQQSPHC…PDPPAASALP (155 aa)) lie on the Extracellular side of the membrane. Disulfide bonds link Cys-35–Cys-142 and Cys-48–Cys-114. Residues Asn-45 and Asn-96 are each glycosylated (N-linked (GlcNAc...) asparagine). Residues 140 to 172 (HRCSDAPPRASALPAPPTGSALPDPQTASALPD) are disordered. Tandem repeats lie at residues 145-153 (APPRASALP), 154-162 (APPTGSALP), 163-171 (DPQTASALP), and 172-180 (DPPAASALP). Residues 145 to 180 (APPRASALPAPPTGSALPDPQTASALPDPPAASALP) are 4 X 9 AA tandem repeats, potential spacer function. Residues 181–201 (AALAVISFLLGLGLGVACVLA) traverse the membrane as a helical segment. Residue Cys-198 is the site of S-palmitoyl cysteine attachment. Topologically, residues 202–240 (RTQIKKLCSWRDKNSAACVVYEDMSHSRCNTLSSPNQYQ) are cytoplasmic.

Interacts with SECTM1. As to expression, expressed on T-cells and natural killer (NK) cells and their precursors.

The protein localises to the membrane. In terms of biological role, transmembrane glycoprotein expressed by T-cells and natural killer (NK) cells and their precursors. Plays a costimulatory role in T-cell activation upon binding to its ligand K12/SECTM1. In turn, mediates the production of cytokines such as IL-2. On resting NK-cells, CD7 activation results in a significant induction of interferon-gamma levels. The polypeptide is T-cell antigen CD7 (CD7) (Homo sapiens (Human)).